Here is a 511-residue protein sequence, read N- to C-terminus: Cytochrome P450 4B1 (511 aa).

The heme site is built by Glu-315 and Cys-453.

The protein belongs to the cytochrome P450 family. The cofactor is heme.

Its subcellular location is the endoplasmic reticulum membrane. It localises to the microsome membrane. The enzyme catalyses an organic molecule + reduced [NADPH--hemoprotein reductase] + O2 = an alcohol + oxidized [NADPH--hemoprotein reductase] + H2O + H(+). Cytochromes P450 are a group of heme-thiolate monooxygenases. In liver microsomes, this enzyme is involved in an NADPH-dependent electron transport pathway. It oxidizes a variety of structurally unrelated compounds, including steroids, fatty acids, and xenobiotics. This chain is Cytochrome P450 4B1 (Cyp4b1), found in Rattus norvegicus (Rat).